The sequence spans 1252 residues: DNA-directed RNA polymerase subunit beta (1252 aa).

This sequence belongs to the RNA polymerase beta chain family. As to quaternary structure, the RNAP catalytic core consists of 2 alpha, 1 beta, 1 beta' and 1 omega subunit. When a sigma factor is associated with the core the holoenzyme is formed, which can initiate transcription.

The catalysed reaction is RNA(n) + a ribonucleoside 5'-triphosphate = RNA(n+1) + diphosphate. Functionally, DNA-dependent RNA polymerase catalyzes the transcription of DNA into RNA using the four ribonucleoside triphosphates as substrates. This chain is DNA-directed RNA polymerase subunit beta, found in Chlamydia muridarum (strain MoPn / Nigg).